Reading from the N-terminus, the 332-residue chain is tRNA N6-adenosine threonylcarbamoyltransferase (332 aa).

H108 and H112 together coordinate Fe cation. Residues 129-133, D161, E178, and S258 contribute to the substrate site; that span reads LISGG. A Fe cation-binding site is contributed by D286.

Belongs to the KAE1 / TsaD family. Requires Fe(2+) as cofactor.

It localises to the cytoplasm. It catalyses the reaction L-threonylcarbamoyladenylate + adenosine(37) in tRNA = N(6)-L-threonylcarbamoyladenosine(37) in tRNA + AMP + H(+). Required for the formation of a threonylcarbamoyl group on adenosine at position 37 (t(6)A37) in tRNAs that read codons beginning with adenine. Is probably involved in the transfer of the threonylcarbamoyl moiety of threonylcarbamoyl-AMP (TC-AMP) to the N6 group of A37. The protein is tRNA N6-adenosine threonylcarbamoyltransferase of Pyrobaculum arsenaticum (strain DSM 13514 / JCM 11321 / PZ6).